The sequence spans 320 residues: Porphobilinogen deaminase (320 aa).

An S-(dipyrrolylmethanemethyl)cysteine modification is found at cysteine 251.

It belongs to the HMBS family. In terms of assembly, monomer. Dipyrromethane serves as cofactor.

The enzyme catalyses 4 porphobilinogen + H2O = hydroxymethylbilane + 4 NH4(+). It participates in porphyrin-containing compound metabolism; protoporphyrin-IX biosynthesis; coproporphyrinogen-III from 5-aminolevulinate: step 2/4. Tetrapolymerization of the monopyrrole PBG into the hydroxymethylbilane pre-uroporphyrinogen in several discrete steps. The sequence is that of Porphobilinogen deaminase from Phenylobacterium zucineum (strain HLK1).